Reading from the N-terminus, the 387-residue chain is 8-amino-7-oxononanoate synthase (387 aa).

R19 serves as a coordination point for substrate. Position 106 to 107 (106 to 107) interacts with pyridoxal 5'-phosphate; the sequence is GY. Residue H131 participates in substrate binding. The pyridoxal 5'-phosphate site is built by S177, H205, and T236. At K239 the chain carries N6-(pyridoxal phosphate)lysine. Substrate is bound at residue T353.

It belongs to the class-II pyridoxal-phosphate-dependent aminotransferase family. BioF subfamily. As to quaternary structure, homodimer. Pyridoxal 5'-phosphate serves as cofactor.

It carries out the reaction 6-carboxyhexanoyl-[ACP] + L-alanine + H(+) = (8S)-8-amino-7-oxononanoate + holo-[ACP] + CO2. The protein operates within cofactor biosynthesis; biotin biosynthesis. Its function is as follows. Catalyzes the decarboxylative condensation of pimeloyl-[acyl-carrier protein] and L-alanine to produce 8-amino-7-oxononanoate (AON), [acyl-carrier protein], and carbon dioxide. This is 8-amino-7-oxononanoate synthase from Nitrosomonas eutropha (strain DSM 101675 / C91 / Nm57).